A 239-amino-acid polypeptide reads, in one-letter code: Phosphoribosylaminoimidazole-succinocarboxamide synthase (239 aa).

It belongs to the SAICAR synthetase family.

The enzyme catalyses 5-amino-1-(5-phospho-D-ribosyl)imidazole-4-carboxylate + L-aspartate + ATP = (2S)-2-[5-amino-1-(5-phospho-beta-D-ribosyl)imidazole-4-carboxamido]succinate + ADP + phosphate + 2 H(+). It functions in the pathway purine metabolism; IMP biosynthesis via de novo pathway; 5-amino-1-(5-phospho-D-ribosyl)imidazole-4-carboxamide from 5-amino-1-(5-phospho-D-ribosyl)imidazole-4-carboxylate: step 1/2. The polypeptide is Phosphoribosylaminoimidazole-succinocarboxamide synthase (Bacillus cereus (strain AH187)).